We begin with the raw amino-acid sequence, 458 residues long: MTIDINKLKEELGLGDLAKSLEGLTAAQKAQEAERMRKEQEEKELARMNDLVSKAVGEDRKRLEEALELVKSLDEKSKKSNELFAQTVEKQQETIVGLQDEIKSLLTAREGRSFVGDSVAKALYGTQENFEDEVEKLVLLSYVMEKGVFETEHGQRHLKAVNQSSSVEVSSESYETIFSQRIIRDLQKELVVGALFEELPMSSKILTMLVEPDAGKATWVAASTYGTDTTTGEEVKGALKEIHFSTYKLAAKSFITDETEEDAIFSLLPLLRKRLIEAHAVSIEEAFMTGDGSGKPKGLLTLASEDSAKVVTEAKADGSVLVTAKTISKLRRKLGRHGLKLSKLVLIVSMDAYYDLLEDEEWQDVAQVGNDSVKLQGQVGRIYGLPVVVSEYFPAKANSAEFAVIVYKDNFVMPRQRAVTVERERQAGKQRDAYYVTQRVNLQRYFANGVVSGTYAAS.

A coiled-coil region spans residues Leu-21 to Glu-110.

The protein belongs to the HK97 phage major capsid protein family. Interacts with the decoration protein; each hexon binds a single copy of the decoration protein. Interacts with the portal protein. Post-translationally, the scaffolding domain delta is cleaved by the prohead protease and lost after assembly. The major capsid protein precursors together with both the portal complex and the maturation protease form prohead I. All copies of the major capsid protein precursor are cleaved to the mature major capsid protein by release of the scaffolding domain delta, yielding the metastable prohead II.

It is found in the virion. Major capsid protein that self-associates to form 120 hexamers and 11 pentamers, building the T=13 icosahedral capsid which about 860 Angstroms in diameter. Responsible for its self-assembly into a procapsid. The phage does not need to encode a separate scaffolfing protein because its capsid protein contains the delta domain that carries that function. The capsid gains its final stability through the reorganization of the subunits that takes place upon expansion. DNA encapsidation through the portal triggers capsid expansion and the binding of the decoration protein to the capsid exterior. Might play a role in counteracting the host Pycsar defense system that is mediated by pyrimidine cyclases and leads to abortive infection. This Escherichia coli (Enterobacteria phage T5) protein is Major capsid protein.